A 97-amino-acid chain; its full sequence is Conotoxin Cal6.1a (97 aa).

The signal sequence occupies residues 1–22 (MKLTTVLVVALLVLAACQFTVT). A disordered region spans residues 23 to 46 (DNSGDDPENPSLRSVGENQNPDST). The propeptide occupies 23 to 68 (DNSGDDPENPSLRSVGENQNPDSTKTITAWATRDMTNMRRGLNRPS). 3 disulfides stabilise this stretch: C71–C87, C78–C91, and C86–C96.

Belongs to the conotoxin O1 superfamily. As to expression, expressed by the venom duct.

It localises to the secreted. Functionally, probable neurotoxin with unknown target. Possibly targets ion channels. The protein is Conotoxin Cal6.1a of Californiconus californicus (California cone).